An 88-amino-acid polypeptide reads, in one-letter code: Small ribosomal subunit protein bS18 (88 aa).

Positions 1–11 (MTTANTTAKDN) are enriched in low complexity. The disordered stretch occupies residues 1–21 (MTTANTTAKDNAATKKRGRKA).

This sequence belongs to the bacterial ribosomal protein bS18 family. Part of the 30S ribosomal subunit. Forms a tight heterodimer with protein bS6.

Binds as a heterodimer with protein bS6 to the central domain of the 16S rRNA, where it helps stabilize the platform of the 30S subunit. The polypeptide is Small ribosomal subunit protein bS18 (Thermoanaerobacter pseudethanolicus (strain ATCC 33223 / 39E) (Clostridium thermohydrosulfuricum)).